A 431-amino-acid polypeptide reads, in one-letter code: Acrosin (431 aa).

Positions 1-16 are cleaved as a signal peptide; it reads MLPTAVLLVLVVSVVA. N19 is a glycosylation site (N-linked (GlcNAc...) asparagine). Disulfide bonds link C22-C152, C26-C160, C71-C87, C175-C244, C207-C223, and C234-C264. Residues 40–288 form the Peptidase S1 domain; it reads VVGGQAAQQG…FLDWIASRIG (249 aa). Active-site charge relay system residues include H86 and D140. An N-linked (GlcNAc...) asparagine glycan is attached at N208. Residue S238 is the Charge relay system of the active site. The segment at 295-385 is disordered; sequence IQPATPTPPT…PPPASTKPPQ (91 aa). Residues 331–341 are compositionally biased toward basic residues; it reads PHPHPHPHPHP. Residues 342-381 show a composition bias toward pro residues; that stretch reads RPPQPPAAQAPPPPPPPPPPPPPPPPPPPPPPPPPPPAST. Positions 351–431 are cleaved as a propeptide — pro-rich; the sequence is APPPPPPPPP…TEIPEVTLAS (81 aa).

The protein belongs to the peptidase S1 family. As to quaternary structure, heavy chain (catalytic) and a light chain linked by two disulfide bonds. Forms a heterodimer with SERPINA5.

It carries out the reaction Preferential cleavage: Arg-|-Xaa, Lys-|-Xaa.. Its activity is regulated as follows. Inhibited by SERPINA5. Acrosin is the major protease of mammalian spermatozoa. It is a serine protease of trypsin-like cleavage specificity, it is synthesized in a zymogen form, proacrosin and stored in the acrosome. In Oryctolagus cuniculus (Rabbit), this protein is Acrosin (ACR).